The following is a 758-amino-acid chain: UPF0313 protein CV_1738 (758 aa).

The Radical SAM core domain maps to 377–642; that stretch reads AWEMIKYSVN…VDVVRDGYRR (266 aa). Cys391, Cys395, and Cys398 together coordinate [4Fe-4S] cluster. The disordered stretch occupies residues 698-758; it reads GAPMNRGKSP…KPGGKTSRSR (61 aa). Residues 727 to 737 are compositionally biased toward gly residues; it reads RGQGGQGGRPG.

The protein belongs to the UPF0313 family. [4Fe-4S] cluster serves as cofactor.

This chain is UPF0313 protein CV_1738, found in Chromobacterium violaceum (strain ATCC 12472 / DSM 30191 / JCM 1249 / CCUG 213 / NBRC 12614 / NCIMB 9131 / NCTC 9757 / MK).